Consider the following 302-residue polypeptide: Sulfate adenylyltransferase subunit 2 (302 aa).

It belongs to the PAPS reductase family. CysD subfamily. Heterodimer composed of CysD, the smaller subunit, and CysN.

The catalysed reaction is sulfate + ATP + H(+) = adenosine 5'-phosphosulfate + diphosphate. The protein operates within sulfur metabolism; hydrogen sulfide biosynthesis; sulfite from sulfate: step 1/3. With CysN forms the ATP sulfurylase (ATPS) that catalyzes the adenylation of sulfate producing adenosine 5'-phosphosulfate (APS) and diphosphate, the first enzymatic step in sulfur assimilation pathway. APS synthesis involves the formation of a high-energy phosphoric-sulfuric acid anhydride bond driven by GTP hydrolysis by CysN coupled to ATP hydrolysis by CysD. This is Sulfate adenylyltransferase subunit 2 from Citrobacter koseri (strain ATCC BAA-895 / CDC 4225-83 / SGSC4696).